Here is a 131-residue protein sequence, read N- to C-terminus: C-C motif chemokine 21 (131 aa).

Positions 1–23 (MAQSLALSLLILVLAFGIPGTQG) are cleaved as a signal peptide. Disulfide bonds link Cys-31/Cys-57, Cys-32/Cys-75, and Cys-103/Cys-119. Residues 89–131 (HLDKTPTPRKPVQGCRKDRGVPKNGKKGKGCKRTEQSQTPKGP) form a disordered region.

The protein belongs to the intercrine beta (chemokine CC) family. As to quaternary structure, monomer. Binds to CCR7. Interacts with PDPN; relocalizes PDPN to the basolateral membrane. Interacts with TNFAIP6 (via Link domain). Interacts with GPR174.

It is found in the secreted. Functionally, inhibits hemopoiesis and stimulates chemotaxis. Chemotactic in vitro for thymocytes and activated T-cells, but not for B-cells, macrophages, or neutrophils. Shows preferential activity towards naive T-cells. May play a role in mediating homing of lymphocytes to secondary lymphoid organs. Binds to atypical chemokine receptor ACKR4 and mediates the recruitment of beta-arrestin (ARRB1/2) to ACKR4. This Macaca mulatta (Rhesus macaque) protein is C-C motif chemokine 21 (CCL21).